Reading from the N-terminus, the 417-residue chain is Serine hydroxymethyltransferase (417 aa).

(6S)-5,6,7,8-tetrahydrofolate contacts are provided by residues Leu121 and 125–127 (GHL). Residue Lys230 is modified to N6-(pyridoxal phosphate)lysine. (6S)-5,6,7,8-tetrahydrofolate is bound at residue 355–357 (SPF).

The protein belongs to the SHMT family. As to quaternary structure, homodimer. It depends on pyridoxal 5'-phosphate as a cofactor.

The protein resides in the cytoplasm. The catalysed reaction is (6R)-5,10-methylene-5,6,7,8-tetrahydrofolate + glycine + H2O = (6S)-5,6,7,8-tetrahydrofolate + L-serine. It functions in the pathway one-carbon metabolism; tetrahydrofolate interconversion. It participates in amino-acid biosynthesis; glycine biosynthesis; glycine from L-serine: step 1/1. In terms of biological role, catalyzes the reversible interconversion of serine and glycine with tetrahydrofolate (THF) serving as the one-carbon carrier. This reaction serves as the major source of one-carbon groups required for the biosynthesis of purines, thymidylate, methionine, and other important biomolecules. Also exhibits THF-independent aldolase activity toward beta-hydroxyamino acids, producing glycine and aldehydes, via a retro-aldol mechanism. This is Serine hydroxymethyltransferase from Legionella pneumophila (strain Lens).